Consider the following 288-residue polypeptide: 33 kDa chaperonin (288 aa).

2 disulfide bridges follow: cysteine 235-cysteine 237 and cysteine 268-cysteine 271.

The protein belongs to the HSP33 family. Post-translationally, under oxidizing conditions two disulfide bonds are formed involving the reactive cysteines. Under reducing conditions zinc is bound to the reactive cysteines and the protein is inactive.

It localises to the cytoplasm. In terms of biological role, redox regulated molecular chaperone. Protects both thermally unfolding and oxidatively damaged proteins from irreversible aggregation. Plays an important role in the bacterial defense system toward oxidative stress. This is 33 kDa chaperonin from Streptococcus suis (strain 98HAH33).